A 258-amino-acid chain; its full sequence is Ribonuclease HII (258 aa).

Positions 1-20 (MRVAPSGGPPHHHAMIRATP) are disordered. Basic residues predominate over residues 10-20 (PHHHAMIRATP). In terms of domain architecture, RNase H type-2 spans 48–236 (WPVAGCDEVG…VVAARERHRA (189 aa)). A divalent metal cation is bound by residues aspartate 54, glutamate 55, and aspartate 145.

Belongs to the RNase HII family. It depends on Mn(2+) as a cofactor. Mg(2+) is required as a cofactor.

It is found in the cytoplasm. The enzyme catalyses Endonucleolytic cleavage to 5'-phosphomonoester.. In terms of biological role, endonuclease that specifically degrades the RNA of RNA-DNA hybrids. This Nitrobacter winogradskyi (strain ATCC 25391 / DSM 10237 / CIP 104748 / NCIMB 11846 / Nb-255) protein is Ribonuclease HII.